Reading from the N-terminus, the 232-residue chain is Ubiquinone biosynthesis O-methyltransferase (232 aa).

Residues arginine 36, glycine 55, aspartate 76, and leucine 120 each contribute to the S-adenosyl-L-methionine site.

This sequence belongs to the methyltransferase superfamily. UbiG/COQ3 family.

The catalysed reaction is a 3-demethylubiquinol + S-adenosyl-L-methionine = a ubiquinol + S-adenosyl-L-homocysteine + H(+). It catalyses the reaction a 3-(all-trans-polyprenyl)benzene-1,2-diol + S-adenosyl-L-methionine = a 2-methoxy-6-(all-trans-polyprenyl)phenol + S-adenosyl-L-homocysteine + H(+). It participates in cofactor biosynthesis; ubiquinone biosynthesis. In terms of biological role, O-methyltransferase that catalyzes the 2 O-methylation steps in the ubiquinone biosynthetic pathway. In Azotobacter vinelandii (strain DJ / ATCC BAA-1303), this protein is Ubiquinone biosynthesis O-methyltransferase.